The chain runs to 98 residues: MPSISINITLAFTAALLGMLMFRSHMMSSLLCLEGMMLSMFILSTLIILNTQFTMSFIMPILLLVFAACEAAIGLALLVMVSNTYGLDHIQNLNLLQC.

Transmembrane regions (helical) follow at residues 2-22 (PSISINITLAFTAALLGMLMF), 29-49 (SLLCLEGMMLSMFILSTLIIL), and 61-81 (ILLLVFAACEAAIGLALLVMV).

It belongs to the complex I subunit 4L family. As to quaternary structure, core subunit of respiratory chain NADH dehydrogenase (Complex I) which is composed of 45 different subunits.

The protein localises to the mitochondrion inner membrane. The enzyme catalyses a ubiquinone + NADH + 5 H(+)(in) = a ubiquinol + NAD(+) + 4 H(+)(out). Core subunit of the mitochondrial membrane respiratory chain NADH dehydrogenase (Complex I) which catalyzes electron transfer from NADH through the respiratory chain, using ubiquinone as an electron acceptor. Part of the enzyme membrane arm which is embedded in the lipid bilayer and involved in proton translocation. This Microcebus griseorufus (Gray-brown mouse lemur) protein is NADH-ubiquinone oxidoreductase chain 4L (MT-ND4L).